Consider the following 2444-residue polypeptide: Protein SON (2444 aa).

Alanine 2 is modified (N-acetylalanine). Lysine 16 carries the post-translational modification N6-acetyllysine. The segment covering 23-37 (ELSSGRSEGQLNGET) has biased composition (polar residues). The disordered stretch occupies residues 23-58 (ELSSGRSEGQLNGETNPPIEGNQAGDTAASARSLPN). Lysine 64 participates in a covalent cross-link: Glycyl lysine isopeptide (Lys-Gly) (interchain with G-Cter in SUMO2). Residues 79–88 (YKPDLKEASR) are compositionally biased toward basic and acidic residues. Residues 79–155 (YKPDLKEASR…GNLESDSFLK (77 aa)) are disordered. A Phosphoserine modification is found at serine 94. A compositionally biased stretch (basic residues) spans 106–130 (KKSKKHKKHKNKKKKKKKEKEKKYK). Positions 131-155 (RQPEESESKLKSHHDGNLESDSFLK) are enriched in basic and acidic residues. A phosphoserine mark is found at serine 142, serine 150, serine 152, and serine 158. Lysine 284 is modified (N6-acetyllysine). 2 disordered regions span residues 301–358 (TLTI…ESLE) and 391–468 (GPPV…PEPP). 2 stretches are compositionally biased toward pro residues: residues 393–406 (PVTPVPELPGPSAT) and 420–439 (PELPGPPATVVPELPGPSVT). Position 395 is a phosphothreonine (threonine 395). The segment at 721–850 (LASNTMDSQM…LATSSMDSQM (130 aa)) is 13 X 10 AA tandem repeats of L-A-[ST]-[NSG]-[TS]-MDSQM. The tract at residues 907 to 983 (DPYRLAQDPY…IAPRPYRLAP (77 aa)) is 11 X 7 AA tandem repeats of [DR]-P-Y-R-[LI][AG][QHP]. Arginine 945 is modified (omega-N-methylarginine). The residue at position 954 (threonine 954) is a Phosphothreonine. Position 993 is a phosphoserine (serine 993). A run of 14 repeats spans residues 1001 to 1006 (ERSMMS), 1009 to 1014 (ERSMMS), 1016 to 1021 (ERSMMS), 1025 to 1030 (ERSMMS), 1033 to 1038 (ERSMMS), 1041 to 1046 (ERSMMS), 1050 to 1055 (ERSMMS), 1058 to 1063 (ERSMMS), 1066 to 1071 (ERSMMS), 1075 to 1080 (DRSMMS), 1084 to 1089 (DRSMMS), 1095 to 1100 (DRSMMS), 1106 to 1111 (DRSMMS), and 1115 to 1120 (DRSMMS). The 14 X 6 AA repeats of [ED]-R-S-M-M-S stretch occupies residues 1001–1120 (ERSMMSSYER…SSYTDRSMMS (120 aa)). Residue arginine 1002 is modified to Asymmetric dimethylarginine. Arginine 1017 is modified (asymmetric dimethylarginine). 2 positions are modified to phosphoserine: serine 1030 and serine 1038. Phosphoserine occurs at positions 1055 and 1063. A Phosphoserine modification is found at serine 1077. Positions 1141–1168 (PPLPPEEPPTMPPLPPEEPPMTPPLPPE) are enriched in pro residues. Positions 1141–1173 (PPLPPEEPPTMPPLPPEEPPMTPPLPPEEPPEG) are 3 X 11 AA tandem repats of P-P-L-P-P-E-E-P-P-[TME]-[MTG]. The tract at residues 1141–1213 (PPLPPEEPPT…PEPPVSQSEI (73 aa)) is disordered. Positions 1177–1213 (STEQSALTADNTWSTEVTLSTGESLSQPEPPVSQSEI) are enriched in polar residues. Residues serine 1678, serine 1723, serine 1727, serine 1772, serine 1784, serine 1791, serine 1794, serine 1807, and serine 1808 each carry the phosphoserine modification. The disordered stretch occupies residues 1802–2072 (ERASESSSEE…RSPKRLTDLD (271 aa)). Composition is skewed to basic and acidic residues over residues 1815–1826 (YEIFVKVKDTHE), 1834–1847 (RDKGEKEKKRDSSL), and 1855–1870 (KSSEHKSRKRTSESRS). Composition is skewed to basic residues over residues 1871 to 1934 (RARK…RKRS) and 1942 to 1973 (AARARSRTPSRRSRSHTPSRRRRSRSVGRRRS). Tandem repeats lie at residues 1950–1956 (PSRRSRS), 1959–1977 (PSRRRRSRSVGRRRSFSIS), 1978–1984 (PSRRSRT), 1985–1991 (PSRRSRT), 1992–1998 (PSRRSRT), 1999–2005 (PSRRSRT), and 2006–2012 (PSRRSRT). The 7 X 7 AA repeats of P-S-R-R-S-R-[TS] stretch occupies residues 1950–2019 (PSRRSRSHTP…SRTPSRRRRS (70 aa)). The tract at residues 1959-2030 (PSRRRRSRSV…SAVRRRSFSI (72 aa)) is 2 X 19 AA repeats of P-S-R-R-R-R-S-R-S-V-V-R-R-R-S-F-S-I-S. Residues serine 1973, serine 1975, and serine 1977 each carry the phosphoserine modification. The span at 1980–2027 (RRSRTPSRRSRTPSRRSRTPSRRSRTPSRRSRTPSRRRRSRSAVRRRS) shows a compositional bias: basic residues. Residues 2013–2019 (PSRRRRS) form a 2-7; approximate repeat. The 3-2; approximate repeat unit spans residues 2020-2030 (RSAVRRRSFSI). A phosphoserine mark is found at serine 2027, serine 2029, serine 2031, serine 2047, and serine 2049. The tract at residues 2031–2057 (SPVRLRRSRTPLRRRFSRSPIRRKRSR) is 3 X tandem repeats of [ST]-P-[VLI]-R-[RL]-[RK]-[RF]-S-R. Residues 2034-2056 (RLRRSRTPLRRRFSRSPIRRKRS) are compositionally biased toward basic residues. The span at 2057–2072 (RSSERGRSPKRLTDLD) shows a compositional bias: basic and acidic residues. Lysine 2073 carries the post-translational modification N6-acetyllysine; alternate. Lysine 2073 is covalently cross-linked (Glycyl lysine isopeptide (Lys-Gly) (interchain with G-Cter in SUMO2); alternate). Residue lysine 2110 forms a Glycyl lysine isopeptide (Lys-Gly) (interchain with G-Cter in SUMO2) linkage. Serine 2147 is subject to Phosphoserine. Residue lysine 2167 forms a Glycyl lysine isopeptide (Lys-Gly) (interchain with G-Cter in SUMO2) linkage. Position 2181 is a phosphothreonine (threonine 2181). The interval 2192 to 2238 (EFPVSSGSQHRKKEADSVYGEWVPVEKNGEESKDDDNVFSSSLPSEP) is disordered. Position 2256 is a phosphoserine (serine 2256). The G-patch domain maps to 2323-2369 (TGGMGAVLMRKMGWREGEGLGKNKEGNKEPILVDFKTDRKGLVAVGE). The DRBM domain maps to 2389–2444 (HPVSALMEICNKRRWQPPEFLLVHDSGPDHRKHFLFRVLRNGSPYQPNCMFFLNRY).

Interacts with SRSF2. Associates with the spliceosome. Interacts with USH1G. As to expression, widely expressed. Highly expressed in brain, heart, spleen, liver, skeletal muscle, kidney and testis.

The protein localises to the nucleus speckle. Functionally, RNA-binding protein that acts as a mRNA splicing cofactor by promoting efficient splicing of transcripts that possess weak splice sites. Specifically promotes splicing of many cell-cycle and DNA-repair transcripts that possess weak splice sites, such as TUBG1, KATNB1, TUBGCP2, AURKB, PCNT, AKT1, RAD23A, and FANCG. Probably acts by facilitating the interaction between Serine/arginine-rich proteins such as SRSF2 and the RNA polymerase II. Also binds to DNA; binds to the consensus DNA sequence: 5'-GA[GT]AN[CG][AG]CC-3'. Essential for correct RNA splicing of multiple genes critical for brain development, neuronal migration and metabolism, including TUBG1, FLNA, PNKP, WDR62, PSMD3, PCK2, PFKL, IDH2, and ACY1. May also regulate the ghrelin signaling in hypothalamic neuron by acting as a negative regulator of GHSR expression. This Mus musculus (Mouse) protein is Protein SON (Son).